A 322-amino-acid polypeptide reads, in one-letter code: tRNA uridine(34) hydroxylase (322 aa).

The Rhodanese domain occupies 126-220 (LAEDTVVIDA…YGKDPEVKGE (95 aa)). The active-site Cysteine persulfide intermediate is the Cys180.

Belongs to the TrhO family.

It carries out the reaction uridine(34) in tRNA + AH2 + O2 = 5-hydroxyuridine(34) in tRNA + A + H2O. Catalyzes oxygen-dependent 5-hydroxyuridine (ho5U) modification at position 34 in tRNAs. This Shouchella clausii (strain KSM-K16) (Alkalihalobacillus clausii) protein is tRNA uridine(34) hydroxylase.